A 117-amino-acid chain; its full sequence is Holo-[acyl-carrier-protein] synthase (117 aa).

Mg(2+) contacts are provided by Asp6 and Glu55.

The protein belongs to the P-Pant transferase superfamily. AcpS family. The cofactor is Mg(2+).

Its subcellular location is the cytoplasm. It carries out the reaction apo-[ACP] + CoA = holo-[ACP] + adenosine 3',5'-bisphosphate + H(+). Its function is as follows. Transfers the 4'-phosphopantetheine moiety from coenzyme A to a Ser of acyl-carrier-protein. The polypeptide is Holo-[acyl-carrier-protein] synthase (Chlorobaculum tepidum (strain ATCC 49652 / DSM 12025 / NBRC 103806 / TLS) (Chlorobium tepidum)).